A 513-amino-acid chain; its full sequence is ATP synthase subunit alpha (513 aa).

169–176 (GDRQTGKT) is a binding site for ATP.

This sequence belongs to the ATPase alpha/beta chains family. F-type ATPases have 2 components, CF(1) - the catalytic core - and CF(0) - the membrane proton channel. CF(1) has five subunits: alpha(3), beta(3), gamma(1), delta(1), epsilon(1). CF(0) has three main subunits: a(1), b(2) and c(9-12). The alpha and beta chains form an alternating ring which encloses part of the gamma chain. CF(1) is attached to CF(0) by a central stalk formed by the gamma and epsilon chains, while a peripheral stalk is formed by the delta and b chains.

The protein resides in the cell inner membrane. It carries out the reaction ATP + H2O + 4 H(+)(in) = ADP + phosphate + 5 H(+)(out). Its function is as follows. Produces ATP from ADP in the presence of a proton gradient across the membrane. The alpha chain is a regulatory subunit. This is ATP synthase subunit alpha from Klebsiella pneumoniae (strain 342).